A 177-amino-acid polypeptide reads, in one-letter code: ATP synthase subunit delta (177 aa).

This sequence belongs to the ATPase delta chain family. In terms of assembly, F-type ATPases have 2 components, F(1) - the catalytic core - and F(0) - the membrane proton channel. F(1) has five subunits: alpha(3), beta(3), gamma(1), delta(1), epsilon(1). F(0) has three main subunits: a(1), b(2) and c(10-14). The alpha and beta chains form an alternating ring which encloses part of the gamma chain. F(1) is attached to F(0) by a central stalk formed by the gamma and epsilon chains, while a peripheral stalk is formed by the delta and b chains.

Its subcellular location is the cell inner membrane. F(1)F(0) ATP synthase produces ATP from ADP in the presence of a proton or sodium gradient. F-type ATPases consist of two structural domains, F(1) containing the extramembraneous catalytic core and F(0) containing the membrane proton channel, linked together by a central stalk and a peripheral stalk. During catalysis, ATP synthesis in the catalytic domain of F(1) is coupled via a rotary mechanism of the central stalk subunits to proton translocation. Its function is as follows. This protein is part of the stalk that links CF(0) to CF(1). It either transmits conformational changes from CF(0) to CF(1) or is implicated in proton conduction. The protein is ATP synthase subunit delta of Leptothrix cholodnii (strain ATCC 51168 / LMG 8142 / SP-6) (Leptothrix discophora (strain SP-6)).